The chain runs to 855 residues: Pre-mRNA-splicing factor SYF1 (855 aa).

HAT repeat units lie at residues 15–47 (LVFEEEDLPYEEEIMRNQFSVKCWLRYIEFKQG), 48–80 (APKPRLNQLYERALKLLPCSYKLWYRYLKARRA), 90–122 (PAYEDVNNCHERAFVFMHKMPRLWLDYCQFLMD), 124–158 (GRVTHTRRTFDRALRALPITQHSRIWPLYLRFLRS), 160–192 (PLPETAVRGYRRFLKLSPESAEEYIEYLKSSDR), 198–230 (QRLATVVNDERFVSKAGKSNYQLWHELCDLISQ), 235–268 (VQSLNVDAIIRGGLTRFTDQLGKLWCSLADYYIR), 270–305 (GHFEKARDVYEEAIRTVMTVRDFTQVFDSYAQFEES), and 369–407 (GRPREIINTYTEAVQTVDPFKATGKPHTLWVAFAKFYED). Lys-420 carries the post-translational modification N6-acetyllysine. HAT repeat units follow at residues 498–530 (GTFQSTKAVYDRILDLRIATPQIVINYAMFLEE), 532–566 (KYFEESFKAYERGISLFKWPNVSDIWSTYLTKFIS), 571–605 (RKLERARDLFEQALDGCPPKYAKTLYLLYAQLEEE), 643–677 (YGVTHTRGIYQKAIEVLSDEHAREMCLRFADMECK), and 679–713 (GEIDRARAIYSFCSQICDPRTTGAFWQTWKDFEVR). A disordered region spans residues 808–855 (AELAQQANPEEIQLGEDEDEDEMDLEPNEVRLEQQSVPAAVFGSLKED). Acidic residues predominate over residues 820–834 (QLGEDEDEDEMDLEP). At Ser-851 the chain carries Phosphoserine.

The protein belongs to the crooked-neck family. In terms of assembly, associates with RNA polymerase II, the TCR-specific proteins CKN1/CSA and ERCC6/CSB, and XPA. Identified in the spliceosome C complex. Component of the XAB2 complex, a multimeric protein complex composed of XAB2, PRPF19, AQR, ZNF830, ISY1, and PPIE. Identified in a pentameric intron-binding (IB) complex composed of AQR, XAB2, ISY1, ZNF830 and PPIE that is incorporated into the spliceosome as a preassembled complex. The IB complex does not contain PRPF19.

It is found in the nucleus. In terms of biological role, involved in pre-mRNA splicing as component of the spliceosome. Involved in transcription-coupled repair (TCR), transcription and pre-mRNA splicing. The protein is Pre-mRNA-splicing factor SYF1 (Xab2) of Mus musculus (Mouse).